The chain runs to 1100 residues: Collagen alpha-2(I) chain (1100 aa).

The disordered stretch occupies residues 1-982 (QYDGVKAPDP…PGPAGGGYDV (982 aa)). Low complexity-rich tracts occupy residues 122–170 (EPGA…AAGP), 200–209 (EPGPNGAVGP), and 216–237 (PGNNGLNGAKGAAGTPGVAGAP). Pro residues predominate over residues 239–249 (FPGPRGGPGPQ). The span at 251 to 261 (PQGAAGQRGLA) shows a compositional bias: low complexity. Residues 268-277 (GVKGDGGPKG) show a composition bias toward gly residues. Low complexity-rich tracts occupy residues 333 to 352 (MPGARGASGAAGPRGPPGDA), 358 to 385 (SGPAGLRGLPGSPGSSGPPGKEGAAGPA), 435 to 448 (APGPDGNNGATGAT), and 460 to 472 (QGASGAPGFQGLP). The segment covering 473–482 (GPAGGAGEAG) has biased composition (gly residues). Residues 507–517 (NPGAAGASGPQ) show a composition bias toward low complexity. Gly residues predominate over residues 530–557 (GTDGGKGEPGAAGAAGGPGHQGPGGMPG). Residues 568–579 (KGEKGEGGHRGP) are compositionally biased toward basic and acidic residues. The segment covering 633 to 646 (PAGAPGFAGPPGAD) has biased composition (low complexity). Over residues 656–665 (GPSGGKGESG) the composition is skewed to gly residues. Low complexity-rich tracts occupy residues 666-691 (PSGPAGPAGQSGPPGASGPAGPTGAR), 702-729 (FPGAAGRVGAAGPAGLVGPPGAAGPAGK), and 757-775 (SGEKGXPGTPGTSGPLGLQ). Residues 788–797 (GSPGGAGAVG) show a composition bias toward gly residues. 2 stretches are compositionally biased toward low complexity: residues 798–820 (EAGRVGPAGPAGARGAPGNLGLP) and 854–866 (AGPTGAAGRPGNR). Over residues 867-876 (GESGPGGAAG) the composition is skewed to gly residues. The segment covering 877 to 892 (AVGPAGARGAAGPSGP) has biased composition (low complexity). The segment covering 893 to 907 (RGEKGVAGEKGERGM) has biased composition (basic and acidic residues). Residues 916 to 935 (LQGMPGPSGPSGDTGSAGPN) show a composition bias toward low complexity. The 30-residue stretch at 1071 to 1100 (TRLPLLDLAPLDLGGADQEFGLDLGPVCFK) folds into the Fibrillar collagen NC1 domain.

It belongs to the fibrillar collagen family.

The protein resides in the secreted. Its subcellular location is the extracellular space. It localises to the extracellular matrix. The sequence is that of Collagen alpha-2(I) chain from Epinephelus caninus (Dogtooth grouper).